A 228-amino-acid chain; its full sequence is Large ribosomal subunit protein uL1 (228 aa).

This sequence belongs to the universal ribosomal protein uL1 family. In terms of assembly, part of the 50S ribosomal subunit.

In terms of biological role, binds directly to 23S rRNA. The L1 stalk is quite mobile in the ribosome, and is involved in E site tRNA release. Protein L1 is also a translational repressor protein, it controls the translation of the L11 operon by binding to its mRNA. The chain is Large ribosomal subunit protein uL1 from Clavibacter michiganensis subsp. michiganensis (strain NCPPB 382).